Reading from the N-terminus, the 252-residue chain is Triosephosphate isomerase (252 aa).

Substrate is bound at residue 10 to 12 (NWK). Catalysis depends on H96, which acts as the Electrophile. E168 functions as the Proton acceptor in the catalytic mechanism. Residues G174, S213, and 234 to 235 (GG) each bind substrate.

It belongs to the triosephosphate isomerase family. In terms of assembly, homodimer.

It localises to the cytoplasm. It carries out the reaction D-glyceraldehyde 3-phosphate = dihydroxyacetone phosphate. It functions in the pathway carbohydrate biosynthesis; gluconeogenesis. Its pathway is carbohydrate degradation; glycolysis; D-glyceraldehyde 3-phosphate from glycerone phosphate: step 1/1. Involved in the gluconeogenesis. Catalyzes stereospecifically the conversion of dihydroxyacetone phosphate (DHAP) to D-glyceraldehyde-3-phosphate (G3P). This is Triosephosphate isomerase from Nitrosomonas eutropha (strain DSM 101675 / C91 / Nm57).